We begin with the raw amino-acid sequence, 205 residues long: Imidazoleglycerol-phosphate dehydratase (205 aa).

A disordered region spans residues 1–27 (MKQASPRAGGAKARRGQVARKTKETDV).

It belongs to the imidazoleglycerol-phosphate dehydratase family.

It localises to the cytoplasm. It catalyses the reaction D-erythro-1-(imidazol-4-yl)glycerol 3-phosphate = 3-(imidazol-4-yl)-2-oxopropyl phosphate + H2O. It participates in amino-acid biosynthesis; L-histidine biosynthesis; L-histidine from 5-phospho-alpha-D-ribose 1-diphosphate: step 6/9. The polypeptide is Imidazoleglycerol-phosphate dehydratase (Anaeromyxobacter sp. (strain Fw109-5)).